The primary structure comprises 317 residues: Porphobilinogen deaminase (317 aa).

The residue at position 240 (cysteine 240) is an S-(dipyrrolylmethanemethyl)cysteine.

Belongs to the HMBS family. Monomer. Requires dipyrromethane as cofactor.

It carries out the reaction 4 porphobilinogen + H2O = hydroxymethylbilane + 4 NH4(+). The protein operates within porphyrin-containing compound metabolism; protoporphyrin-IX biosynthesis; coproporphyrinogen-III from 5-aminolevulinate: step 2/4. Functionally, tetrapolymerization of the monopyrrole PBG into the hydroxymethylbilane pre-uroporphyrinogen in several discrete steps. This is Porphobilinogen deaminase from Nitratidesulfovibrio vulgaris (strain DSM 19637 / Miyazaki F) (Desulfovibrio vulgaris).